The following is a 159-amino-acid chain: Phosphopantetheine adenylyltransferase (159 aa).

Position 9 (S9) interacts with substrate. Residues S9 to F10 and H17 each bind ATP. Residues K41, L73, and K87 each coordinate substrate. Residues G88–R90, E98, and Y122–S128 each bind ATP.

Belongs to the bacterial CoaD family. Homohexamer. It depends on Mg(2+) as a cofactor.

It is found in the cytoplasm. It carries out the reaction (R)-4'-phosphopantetheine + ATP + H(+) = 3'-dephospho-CoA + diphosphate. Its pathway is cofactor biosynthesis; coenzyme A biosynthesis; CoA from (R)-pantothenate: step 4/5. Its function is as follows. Reversibly transfers an adenylyl group from ATP to 4'-phosphopantetheine, yielding dephospho-CoA (dPCoA) and pyrophosphate. This is Phosphopantetheine adenylyltransferase from Streptomyces griseus subsp. griseus (strain JCM 4626 / CBS 651.72 / NBRC 13350 / KCC S-0626 / ISP 5235).